We begin with the raw amino-acid sequence, 409 residues long: Argininosuccinate synthase (409 aa).

ATP is bound by residues 12–20 (AYSGGLDTS) and A39. Residues Y90 and S95 each contribute to the L-citrulline site. An ATP-binding site is contributed by G120. The L-aspartate site is built by T122, N126, and D127. Position 126 (N126) interacts with L-citrulline. The L-citrulline site is built by R130, S181, S190, E266, and Y278.

The protein belongs to the argininosuccinate synthase family. Type 1 subfamily. Homotetramer.

It localises to the cytoplasm. The enzyme catalyses L-citrulline + L-aspartate + ATP = 2-(N(omega)-L-arginino)succinate + AMP + diphosphate + H(+). Its pathway is amino-acid biosynthesis; L-arginine biosynthesis; L-arginine from L-ornithine and carbamoyl phosphate: step 2/3. The polypeptide is Argininosuccinate synthase (Gluconacetobacter diazotrophicus (strain ATCC 49037 / DSM 5601 / CCUG 37298 / CIP 103539 / LMG 7603 / PAl5)).